A 383-amino-acid chain; its full sequence is S-adenosylmethionine synthase (383 aa).

Residue H15 coordinates ATP. D17 provides a ligand contact to Mg(2+). Residue E43 participates in K(+) binding. Residues E56 and Q99 each coordinate L-methionine. Positions 99–109 are flexible loop; it reads QSPDINQGVDR. ATP-binding positions include 164–166, 230–231, D239, 245–246, A262, and K266; these read DAK, RF, and RK. Residue D239 coordinates L-methionine. K270 contributes to the L-methionine binding site.

The protein belongs to the AdoMet synthase family. Homotetramer; dimer of dimers. The cofactor is Mg(2+). It depends on K(+) as a cofactor.

Its subcellular location is the cytoplasm. It catalyses the reaction L-methionine + ATP + H2O = S-adenosyl-L-methionine + phosphate + diphosphate. The protein operates within amino-acid biosynthesis; S-adenosyl-L-methionine biosynthesis; S-adenosyl-L-methionine from L-methionine: step 1/1. Catalyzes the formation of S-adenosylmethionine (AdoMet) from methionine and ATP. The overall synthetic reaction is composed of two sequential steps, AdoMet formation and the subsequent tripolyphosphate hydrolysis which occurs prior to release of AdoMet from the enzyme. The polypeptide is S-adenosylmethionine synthase (Shewanella sp. (strain W3-18-1)).